Here is a 163-residue protein sequence, read N- to C-terminus: Photosystem II extrinsic protein V (163 aa).

A signal peptide spans 1–26; it reads MLKRSSWLATLLGLLTVASVSTIVYA. Residues Cys63, Cys66, His67, and His118 each contribute to the heme c site.

It belongs to the cytochrome c family. PsbV subfamily. In terms of assembly, PSII is composed of 1 copy each of membrane proteins PsbA, PsbB, PsbC, PsbD, PsbE, PsbF, PsbH, PsbI, PsbJ, PsbK, PsbL, PsbM, PsbT, PsbY, PsbZ, Psb30/Ycf12, at least 3 peripheral proteins of the oxygen-evolving complex and a large number of cofactors. It forms dimeric complexes. The extrinsic subunits in red algae are PsbO (OEC33), PsbQ', cytochrome c-550 and PsbU. Requires heme c as cofactor.

It is found in the plastid. The protein resides in the chloroplast thylakoid membrane. In terms of biological role, one of the extrinsic, lumenal subunits of photosystem II (PSII). PSII is a light-driven water plastoquinone oxidoreductase, using light energy to abstract electrons from H(2)O, generating a proton gradient subsequently used for ATP formation. The extrinsic proteins stabilize the structure of photosystem II oxygen-evolving complex (OEC), the ion environment of oxygen evolution and protect the OEC against heat-induced inactivation. This chain is Photosystem II extrinsic protein V, found in Porphyra purpurea (Red seaweed).